Here is a 211-residue protein sequence, read N- to C-terminus: Large ribosomal subunit protein bL25 (211 aa).

Residues 188–211 (APKAAKVSTDDEAAAPAEEAPAAE) form a disordered region. Low complexity predominate over residues 201-211 (AAPAEEAPAAE).

The protein belongs to the bacterial ribosomal protein bL25 family. CTC subfamily. As to quaternary structure, part of the 50S ribosomal subunit; part of the 5S rRNA/L5/L18/L25 subcomplex. Contacts the 5S rRNA. Binds to the 5S rRNA independently of L5 and L18.

In terms of biological role, this is one of the proteins that binds to the 5S RNA in the ribosome where it forms part of the central protuberance. The chain is Large ribosomal subunit protein bL25 from Colwellia psychrerythraea (strain 34H / ATCC BAA-681) (Vibrio psychroerythus).